The primary structure comprises 295 residues: Glutamyl-Q tRNA(Asp) synthetase (295 aa).

Residues 5 to 9 and Glu-41 contribute to the L-glutamate site; that span reads RFAPS. The 'HIGH' region motif lies at 8-18; it reads PSPTGLLHIGS. Cys-97, Cys-99, Tyr-117, and Cys-121 together coordinate Zn(2+). L-glutamate is bound by residues Tyr-178 and Arg-196. The short motif at 234 to 238 is the 'KMSKS' region element; it reads KWSKQ. Position 237 (Lys-237) interacts with ATP.

Belongs to the class-I aminoacyl-tRNA synthetase family. GluQ subfamily. Requires Zn(2+) as cofactor.

Functionally, catalyzes the tRNA-independent activation of glutamate in presence of ATP and the subsequent transfer of glutamate onto a tRNA(Asp). Glutamate is transferred on the 2-amino-5-(4,5-dihydroxy-2-cyclopenten-1-yl) moiety of the queuosine in the wobble position of the QUC anticodon. This Neisseria meningitidis serogroup C (strain 053442) protein is Glutamyl-Q tRNA(Asp) synthetase.